A 594-amino-acid chain; its full sequence is Chondroitin sulfate proteoglycan 5 (594 aa).

A compositionally biased stretch (polar residues) spans 1-12 (MGVGGTSASDTA). An N-terminal signal peptide occupies residues 1 to 18 (MGVGGTSASDTALSLCPT). Disordered stretches follow at residues 1–325 (MGVG…PWGL) and 343–418 (TTSF…SECR). Over 19-481 (APEWPPRNGS…AIVTDFQVLC (463 aa)) the chain is Extracellular. Asparagine 26 and asparagine 44 each carry an N-linked (GlcNAc...) asparagine glycan. A compositionally biased stretch (low complexity) spans 140–181 (SPGLGLSSPGPNLGLPSLDLPNPNLGLPDPNLGLPNPSLGLP). Composition is skewed to pro residues over residues 182–195 (SPGP…PNPN) and 219–229 (IPLPSPSPGPG). A compositionally biased stretch (low complexity) spans 248-259 (PQPSSSPAPAQR). Residues 298-310 (GGHGPGGGHGAGG) show a composition bias toward gly residues. The interval 338 to 377 (ADFYPTTSFYAEGDDDAEEELEEDEEEEEEEDGGLEDENG) is interaction with TNC and TNR. Over residues 349-375 (EGDDDAEEELEEDEEEEEEEDGGLEDE) the composition is skewed to acidic residues. N-linked (GlcNAc...) asparagine glycans are attached at residues asparagine 413 and asparagine 425. The EGF-like domain maps to 429–471 (RSVCDLVPSYCHNGGQCYLVESHGAFCRCNTQDYTWHKGTRCE). Intrachain disulfides connect cysteine 432-cysteine 445, cysteine 439-cysteine 455, and cysteine 457-cysteine 470. The chain crosses the membrane as a helical span at residues 482-502 (VAVGSAALVLLLLFMLTVFFA). Residues 503–594 (KKLYLLKTEN…GVPCLHNNLG (92 aa)) are Cytoplasmic-facing. The tract at residues 535 to 594 (TIAEGSHPNDDPGAPHKLQDPLKPGLKDEEPLSILSTAPEEGSKGEPGGCGVPCLHNNLG) is disordered. Positions 541–564 (HPNDDPGAPHKLQDPLKPGLKDEE) are enriched in basic and acidic residues.

Binds TNC and TNR. The 80 kDa form but not the 140 kDa form can bind TNC and TNR when expressed at the cell surface. Post-translationally, different forms exist: the 140 kDa form (also reported as 130 kDa), which probably consists of the entire protein, and the 38 and 80 kDa forms, which are probably cleaved in their N-terminus. Increase in synaptic activity, results in shedding of the extracellular domain and expression at the cell surface of a 38 kDa form. A form of 200 kDa has also been reported, which is probably hyperglycosylated. N-glycosylated. In terms of processing, O-glycosylated; contains chondroitin sulfate glycans. Part-time proteoglycan, the 200 kDa form is the only one containing chondroitin sulfate glycans. In terms of tissue distribution, expressed in astroglial and neuronal surfaces in different parts of the embryonic brain. Expressed in adult brain and retina (at protein level).

Its subcellular location is the cell membrane. May function as a growth and differentiation factor involved in neuritogenesis and more particularly in neurite extension. The protein is Chondroitin sulfate proteoglycan 5 (CSPG5) of Gallus gallus (Chicken).